We begin with the raw amino-acid sequence, 143 residues long: Mini-ribonuclease 3 (143 aa).

The active site involves aspartate 35.

This sequence belongs to the MrnC RNase family. Homodimer. The cofactor is Mg(2+).

The protein resides in the cytoplasm. Its function is as follows. Involved in correct processing of both the 5' and 3' ends of 23S rRNA precursor. Processes 30S rRNA precursor transcript even in absence of ribonuclease 3 (Rnc); Rnc processes 30S rRNA into smaller rRNA precursors. In Synechocystis sp. (strain ATCC 27184 / PCC 6803 / Kazusa), this protein is Mini-ribonuclease 3.